The following is a 361-amino-acid chain: Polyribonucleotide 5'-hydroxyl-kinase MJ1315 (361 aa).

An ATP-binding site is contributed by 39–46; that stretch reads GGVDSGKT.

It depends on a divalent metal cation as a cofactor.

It catalyses the reaction a 5'-end dephospho-2'-deoxyribonucleoside-DNA + ATP = a 5'-end 5'-phospho-2'-deoxyribonucleoside-DNA + ADP + H(+). The enzyme catalyses a 5'-end dephospho-ribonucleoside-RNA + ATP = a 5'-end 5'-phospho-ribonucleoside-RNA + ADP + H(+). Its function is as follows. Polynucleotide kinase that can phosphorylate the 5'-hydroxyl groups of both single-stranded RNA (ssRNA) and single-stranded DNA (ssDNA). Exhibits a strong preference for ssRNA. The sequence is that of Polyribonucleotide 5'-hydroxyl-kinase MJ1315 from Methanocaldococcus jannaschii (strain ATCC 43067 / DSM 2661 / JAL-1 / JCM 10045 / NBRC 100440) (Methanococcus jannaschii).